The following is a 357-amino-acid chain: UPF0324 membrane protein BMEI1914 (357 aa).

The next 11 membrane-spanning stretches (helical) occupy residues 29-48 (NILPGLGLSVAITAAAMVLE), 58-77 (AWLEALVIAILLGTAVRSLA), 90-112 (SAKLLLEIAVVLLGASISASAVI), 117-136 (GLIFGIAAVVAVAITLSYGI), 149-171 (LVACGNSICGNSAIAAMAPVIGA), 181-203 (AFTAILGVIVVLTLPLLVPLLGL), 210-232 (ILAGLTVYAVPQVLAATAPVSLL), 242-261 (LVRVLMLGPVILVFALISGN), 268-290 (PGFFQLVPWFIIGFLAMMALHSL), 300-322 (AIQYASMLLTIISMAALGLGVDI), and 334-356 (LTAILSLIALCCISLGLIHMLGV).

This sequence belongs to the UPF0324 family.

It localises to the cell membrane. This Brucella melitensis biotype 1 (strain ATCC 23456 / CCUG 17765 / NCTC 10094 / 16M) protein is UPF0324 membrane protein BMEI1914.